A 284-amino-acid polypeptide reads, in one-letter code: Expansin-A17 (284 aa).

Residues 1-21 form the signal peptide; that stretch reads MASSWNNPAIFLAAALAVATA. Residues 71-185 form the Expansin-like EG45 domain; that stretch reads GGACGYVSND…RRVPCQRTGG (115 aa). One can recognise an Expansin-like CBD domain in the interval 195–279; it reads YWLLLYVMNV…WWITGLCYQG (85 aa).

This sequence belongs to the expansin family. Expansin A subfamily. In terms of tissue distribution, expressed in roots.

The protein localises to the secreted. It localises to the cell wall. The protein resides in the membrane. Its function is as follows. May cause loosening and extension of plant cell walls by disrupting non-covalent bonding between cellulose microfibrils and matrix glucans. No enzymatic activity has been found. May be required for rapid internodal elongation in deepwater rice during submergence. The chain is Expansin-A17 (EXPA17) from Oryza sativa subsp. japonica (Rice).